The sequence spans 429 residues: Histidine--tRNA ligase (429 aa).

The protein belongs to the class-II aminoacyl-tRNA synthetase family. As to quaternary structure, homodimer.

The protein localises to the cytoplasm. The enzyme catalyses tRNA(His) + L-histidine + ATP = L-histidyl-tRNA(His) + AMP + diphosphate + H(+). The sequence is that of Histidine--tRNA ligase from Rippkaea orientalis (strain PCC 8801 / RF-1) (Cyanothece sp. (strain PCC 8801)).